A 104-amino-acid chain; its full sequence is MLTKVVFLFFWSRSDSTKKLAACNHATLAHYILTPALYSDACAIYSDVYSITIIVVATVVRNPARCSLRARKFCRLFSSFFQFHYLKELFYFIRKPDDKFSSFI.

This is an uncharacterized protein from Saccharomyces cerevisiae (strain ATCC 204508 / S288c) (Baker's yeast).